Reading from the N-terminus, the 304-residue chain is Triplex capsid protein 2 (304 aa).

Belongs to the herpesviridae TRX2 protein family. As to quaternary structure, interacts with TRX1 and major capisd protein/MCP.

It localises to the virion. Its subcellular location is the host nucleus. Functionally, structural component of the T=16 icosahedral capsid. The capsid is composed of pentamers and hexamers of major capsid protein/MCP, which are linked together by heterotrimers called triplexes. These triplexes are formed by a single molecule of triplex protein 1/TRX1 and two copies of triplex protein 2/TRX2. Additionally, TRX1 is required for efficient transport of TRX2 to the nucleus, which is the site of capsid assembly. The sequence is that of Triplex capsid protein 2 from Saimiri sciureus (Common squirrel monkey).